Consider the following 232-residue polypeptide: MNSPLSYNNVIEVTDLQRAFKQGEHEIQILRGIDLIVRRGEILALLGPSGAGKSTFLQAIGLLENGFTGSINILGQEIGSLNDKERTAIRRDHLGFVYQFHHLLPDFSALENVMLPQLIQGKSSHQAKEHAHFLLNSLKLEERLKHYPSQLSGGEQQRVAVARALANRPALVLADEPTGNLDEATGDIVLHEFLRLVRRQGSAAIIATHNMAMARKMDRIVTLHDGRLIEEY.

In terms of domain architecture, ABC transporter spans 11–232 (IEVTDLQRAF…LHDGRLIEEY (222 aa)). 47–54 (GPSGAGKS) serves as a coordination point for ATP.

This sequence belongs to the ABC transporter superfamily. Lipoprotein translocase (TC 3.A.1.125) family. The complex is composed of two ATP-binding proteins (LolD) and two transmembrane proteins (LolC and LolE).

It localises to the cell inner membrane. Part of the ABC transporter complex LolCDE involved in the translocation of mature outer membrane-directed lipoproteins, from the inner membrane to the periplasmic chaperone, LolA. Responsible for the formation of the LolA-lipoprotein complex in an ATP-dependent manner. The polypeptide is Lipoprotein-releasing system ATP-binding protein LolD (Zymomonas mobilis subsp. mobilis (strain ATCC 10988 / DSM 424 / LMG 404 / NCIMB 8938 / NRRL B-806 / ZM1)).